A 590-amino-acid polypeptide reads, in one-letter code: Aspartate--tRNA(Asp/Asn) ligase (590 aa).

Glu-175 lines the L-aspartate pocket. The interval Gln-199–Lys-202 is aspartate. Positions 221 and 450 each coordinate L-aspartate. An ATP-binding site is contributed by Arg-221–Glu-223. An ATP-binding site is contributed by Glu-484. Arg-491 lines the L-aspartate pocket. Gly-536–Arg-539 contacts ATP.

This sequence belongs to the class-II aminoacyl-tRNA synthetase family. Type 1 subfamily. Homodimer.

The protein localises to the cytoplasm. The enzyme catalyses tRNA(Asx) + L-aspartate + ATP = L-aspartyl-tRNA(Asx) + AMP + diphosphate. Aspartyl-tRNA synthetase with relaxed tRNA specificity since it is able to aspartylate not only its cognate tRNA(Asp) but also tRNA(Asn). Reaction proceeds in two steps: L-aspartate is first activated by ATP to form Asp-AMP and then transferred to the acceptor end of tRNA(Asp/Asn). This chain is Aspartate--tRNA(Asp/Asn) ligase, found in Bradyrhizobium sp. (strain ORS 278).